The following is a 45-amino-acid chain: Small polypeptide DEVIL 23 (45 aa).

Residues 13–44 (KSTLRCWDWCKEQRTRAYIIWRCLIFLLRWDD) are required for DVL/RTFL small polypeptide activity. Residues 22–39 (CKEQRTRAYIIWRCLIFL) form a helical membrane-spanning segment.

This sequence belongs to the DVL/RTFL small polypeptides family.

The protein localises to the cell membrane. In terms of biological role, small polypeptide acting as a regulatory molecule which coordinates cellular responses required for differentiation, growth and development, probably by restricting polar cell proliferation in lateral organs and coordinating socket cell recruitment and differentiation at trichome sites. In Arabidopsis thaliana (Mouse-ear cress), this protein is Small polypeptide DEVIL 23.